Consider the following 338-residue polypeptide: UPF0324 membrane protein HI_1643 (338 aa).

The next 10 helical transmembrane spans lie at 5 to 23 (PFYFGLIFIAIIAVLANYL), 33 to 55 (HISALIIAILLGMAIGNTIYPQF), 62 to 84 (GVLFAKGTLLRAGIVLYGFRLTF), 94 to 116 (AVVTDAIMLISTFFLTALLGIRY), 123 to 145 (LVYLTGAGCSICGAAAVMAAEPV), 155 to 177 (VAIAVVVIFGTLSIFTYPFFYTW), 222 to 239 (LRVMMLAPFLFMLSWLLT), 254 to 273 (IPWFAVLFIGVAIFNSFDLL), 280 to 302 (LFVEIDSFLLISAMAALGLTTQA), and 312 to 334 (PLVLGVLIYLWLVIGGFLVNYGI).

The protein belongs to the UPF0324 family.

Its subcellular location is the cell membrane. This is UPF0324 membrane protein HI_1643 from Haemophilus influenzae (strain ATCC 51907 / DSM 11121 / KW20 / Rd).